Here is a 175-residue protein sequence, read N- to C-terminus: MLDREGYRPNVGIILVNARNEVFWGKRIREHSWQFPQGGIKHGESPEQAMYRELYEEVGLRPEHVKILGRTRGWLRYDVPKHWIRREWRNTYRGQKQIWYLLRLVGRDTDVCLRASTHPEFDAWRWSEYWVPLEAVIEFKRQVYQQALTELSRLLFRSKPAELPEGYRQGTASQA.

One can recognise a Nudix hydrolase domain in the interval Gly-6–Thr-149. A Nudix box motif is present at residues Gly-38–Gly-59.

It belongs to the Nudix hydrolase family. RppH subfamily. A divalent metal cation is required as a cofactor.

Its function is as follows. Accelerates the degradation of transcripts by removing pyrophosphate from the 5'-end of triphosphorylated RNA, leading to a more labile monophosphorylated state that can stimulate subsequent ribonuclease cleavage. This is RNA pyrophosphohydrolase from Azoarcus sp. (strain BH72).